Here is a 43-residue protein sequence, read N- to C-terminus: Metallothionein A (43 aa).

A beta region spans residues 1-16 (SCAGSCKCKNCRCRSC). C2, C6, C8, C11, C13, C16, C20, C21, C23, C24, C28, C31, C35, and C37 together coordinate a divalent metal cation. Residues 17 to 43 (RKSCCSCCPAGCNNCAKGCVCKEPASS) form an alpha region.

The protein belongs to the metallothionein superfamily. Type 1 family.

In terms of biological role, metallothioneins have a high content of cysteine residues that bind various heavy metals. The chain is Metallothionein A from Colinus virginianus (Northern bobwhite).